The sequence spans 144 residues: Large ribosomal subunit protein uL11 (144 aa).

The protein belongs to the universal ribosomal protein uL11 family. In terms of assembly, part of the ribosomal stalk of the 50S ribosomal subunit. Interacts with L10 and the large rRNA to form the base of the stalk. L10 forms an elongated spine to which L12 dimers bind in a sequential fashion forming a multimeric L10(L12)X complex. Post-translationally, one or more lysine residues are methylated.

In terms of biological role, forms part of the ribosomal stalk which helps the ribosome interact with GTP-bound translation factors. The protein is Large ribosomal subunit protein uL11 of Frankia alni (strain DSM 45986 / CECT 9034 / ACN14a).